The primary structure comprises 795 residues: Glutamine--tRNA ligase, cytoplasmic (795 aa).

Residues 188–220 (ADNEKPTKKKEKKEKPAKVEEKKAVVETTAEPS) are disordered. Basic and acidic residues predominate over residues 200-212 (KEKPAKVEEKKAV). The 'HIGH' region motif lies at 277–287 (PEPNGYLHIGH). ATP is bound by residues 278-280 (EPN) and 284-290 (HIGHAKA). Positions 310 and 450 each coordinate L-glutamine. ATP is bound by residues threonine 469, 498–499 (RL), and 506–508 (MSK). Positions 505 to 509 (VMSKR) match the 'KMSKS' region motif.

Belongs to the class-I aminoacyl-tRNA synthetase family.

Its subcellular location is the cytoplasm. It is found in the cytosol. It carries out the reaction tRNA(Gln) + L-glutamine + ATP = L-glutaminyl-tRNA(Gln) + AMP + diphosphate. This is Glutamine--tRNA ligase, cytoplasmic from Arabidopsis thaliana (Mouse-ear cress).